An 862-amino-acid chain; its full sequence is ATP-dependent helicase Lhr-Core (862 aa).

The ATP site is built by glutamine 37, lysine 60, threonine 61, aspartate 178, glutamate 179, valine 360, arginine 377, and histidine 380. In terms of domain architecture, Helicase ATP-binding spans 41–233 (IMDIHRGRNV…FLVGYSYGSE (193 aa)). Positions 178-181 (DEIH) match the DEAH box motif. The Helicase C-terminal domain maps to 269-424 (ALYDILHDLI…SIKVPENCLD (156 aa)). A WH domain region spans residues 425-513 (VLAQHIYGMA…LYSTNIGTIP (89 aa)). The tract at residues 514–862 (DRSAAVVKCG…HQAIIDEIKR (349 aa)) is domain 4.

This sequence belongs to the Lhr helicase family. Lhr-Core subfamily. Monomer.

The catalysed reaction is Couples ATP hydrolysis with the unwinding of duplex DNA by translocating in the 3'-5' direction.. It carries out the reaction ATP + H2O = ADP + phosphate + H(+). DNA helicase that translocates in a 3'-5' direction on single-stranded (ss)DNA, probably involved in DNA repair. Most active on three- or four-stranded forked DNA; flayed structures and Holliday junction (HJ) substrates are unwound slightly less well. Also unwinds 3'-tailed duplexes; both RNA:DNA hybrids and double-stranded (ds)DNA with a 3'-single strand (ss)DNA loading strand are unwound. Substrates where the helicase loads on a 3'-ssRNA tail (DNA:RNA and RNA:RNA) were not tested. Blunt-ended dsDNA is not a substrate. Probably involved in replication-coupled DNA repair; remodeling of fork DNA after binding by Lhr generates ssDNA for ATP-dependent DNA translocation. This Methanothermobacter thermautotrophicus (strain ATCC 29096 / DSM 1053 / JCM 10044 / NBRC 100330 / Delta H) (Methanobacterium thermoautotrophicum) protein is ATP-dependent helicase Lhr-Core.